The sequence spans 661 residues: UvrABC system protein B (661 aa).

A Helicase ATP-binding domain is found at alanine 25 to proline 414. Glycine 38–threonine 45 lines the ATP pocket. The short motif at tyrosine 91 to isoleucine 114 is the Beta-hairpin element. The region spanning glutamine 430–isoleucine 592 is the Helicase C-terminal domain. One can recognise a UVR domain in the interval lysine 621 to alanine 656.

Belongs to the UvrB family. As to quaternary structure, forms a heterotetramer with UvrA during the search for lesions. Interacts with UvrC in an incision complex.

It is found in the cytoplasm. Functionally, the UvrABC repair system catalyzes the recognition and processing of DNA lesions. A damage recognition complex composed of 2 UvrA and 2 UvrB subunits scans DNA for abnormalities. Upon binding of the UvrA(2)B(2) complex to a putative damaged site, the DNA wraps around one UvrB monomer. DNA wrap is dependent on ATP binding by UvrB and probably causes local melting of the DNA helix, facilitating insertion of UvrB beta-hairpin between the DNA strands. Then UvrB probes one DNA strand for the presence of a lesion. If a lesion is found the UvrA subunits dissociate and the UvrB-DNA preincision complex is formed. This complex is subsequently bound by UvrC and the second UvrB is released. If no lesion is found, the DNA wraps around the other UvrB subunit that will check the other stand for damage. In Rickettsia felis (strain ATCC VR-1525 / URRWXCal2) (Rickettsia azadi), this protein is UvrABC system protein B.